A 383-amino-acid chain; its full sequence is MSSGQSVLKQLHPLIRPYAETVLRKGNVGVCMGNLRISDVKSGRPTLTQTKEPCGDRFKIYIPFAGDSLKWEVIFDSCQPSNPPDFIFLGENGNFDPDIEKLENLTHWDPKNPESLVLAIEDLMREYRCYQKQLIEGYSRLQFEYSSLQGMEACDDVEVHMGNRLPGTLDSPVNFLIRLPIDLSPIPQYLVKDDPGEDLAVLLAKFHNSEGSRVTPQLFLSPKVEHALGDNTALRIPRFPTGGCLMDYVPQVQDFLQKQIDHIVEGYQRRREYVAAFISRFGGSVLEYDAESFTKLSLVLEWNEFFFVLHIELPSRFPQDMPVFTFQSCYHLSKTNGEPYVSVQKSYPYSPRWTGEEMAHRAKLFILDFIPQFKKVSVSSNKL.

UEV-like regions lie at residues 31 to 150 (CMGN…SLQG) and 274 to 364 (VAAF…RAKL).

Belongs to the BABAM2 family. In terms of assembly, component of the ARISC complex, at least composed of UIMC1/RAP80, ABRAXAS1, BRCC3/BRCC36, BABAM2 and BABAM1/NBA1. Component of the BRCA1-A complex, at least composed of BRCA1, BARD1, UIMC1/RAP80, ABRAXAS1, BRCC3/BRCC36, BABAM2 and BABAM1/NBA1. In the BRCA1-A complex, interacts directly with ABRAXAS1, BRCC3/BRCC36 and BABAM1/NBA1. Binds polyubiquitin. Component of the BRISC complex, at least composed of ABRAXAS2, BRCC3/BRCC36, BABAM2 and BABAM1/NBA1.

It is found in the cytoplasm. It localises to the nucleus. Functionally, component of the BRCA1-A complex, a complex that specifically recognizes 'Lys-63'-linked ubiquitinated histones H2A and H2AX at DNA lesions sites, leading to target the BRCA1-BARD1 heterodimer to sites of DNA damage at double-strand breaks (DSBs). The BRCA1-A complex also possesses deubiquitinase activity that specifically removes 'Lys-63'-linked ubiquitin on histones H2A and H2AX. In the BRCA1-A complex, it acts as an adapter that bridges the interaction between BABAM1/NBA1 and the rest of the complex, thereby being required for the complex integrity and modulating the E3 ubiquitin ligase activity of the BRCA1-BARD1 heterodimer. Component of the BRISC complex, a multiprotein complex that specifically cleaves 'Lys-63'-linked ubiquitin in various substrates. Within the BRISC complex, acts as an adapter that bridges the interaction between BABAM1/NBA1 and the rest of the complex, thereby being required for the complex integrity. The BRISC complex is required for normal mitotic spindle assembly and microtubule attachment to kinetochores via its role in deubiquitinating NUMA1. The BRISC complex plays a role in interferon signaling via its role in the deubiquitination of the interferon receptor IFNAR1; deubiquitination increases IFNAR1 activity by enhancing its stability and cell surface expression. Down-regulates the response to bacterial lipopolysaccharide (LPS) via its role in IFNAR1 deubiquitination. May play a role in homeostasis or cellular differentiation in cells of neural, epithelial and germline origins. May also act as a death receptor-associated anti-apoptotic protein, which inhibits the mitochondrial apoptotic pathway. May regulate TNF-alpha signaling through its interactions with TNFRSF1A; however these effects may be indirect. This Branchiostoma floridae (Florida lancelet) protein is BRISC and BRCA1-A complex member 2 (BABAM2).